Consider the following 188-residue polypeptide: ATP synthase subunit delta (188 aa).

It belongs to the ATPase delta chain family. F-type ATPases have 2 components, F(1) - the catalytic core - and F(0) - the membrane proton channel. F(1) has five subunits: alpha(3), beta(3), gamma(1), delta(1), epsilon(1). F(0) has three main subunits: a(1), b(2) and c(10-14). The alpha and beta chains form an alternating ring which encloses part of the gamma chain. F(1) is attached to F(0) by a central stalk formed by the gamma and epsilon chains, while a peripheral stalk is formed by the delta and b chains.

The protein localises to the cell membrane. Functionally, f(1)F(0) ATP synthase produces ATP from ADP in the presence of a proton or sodium gradient. F-type ATPases consist of two structural domains, F(1) containing the extramembraneous catalytic core and F(0) containing the membrane proton channel, linked together by a central stalk and a peripheral stalk. During catalysis, ATP synthesis in the catalytic domain of F(1) is coupled via a rotary mechanism of the central stalk subunits to proton translocation. In terms of biological role, this protein is part of the stalk that links CF(0) to CF(1). It either transmits conformational changes from CF(0) to CF(1) or is implicated in proton conduction. The sequence is that of ATP synthase subunit delta from Lawsonia intracellularis (strain PHE/MN1-00).